The chain runs to 167 residues: Zinc finger CCCH domain-containing protein 3 (167 aa).

Residues 63 to 91 form a C3H1-type zinc finger; the sequence is AAAIGVCQHFVRTGTCKFGDSCRYFHPKP. Residues 89–101 show a composition bias toward pro residues; the sequence is PKPPPANPGPAPS. Residues 89–167 form a disordered region; that stretch reads PKPPPANPGP…YPPFPFVDWG (79 aa). The span at 108-120 shows a compositional bias: polar residues; sequence MAQQSNIQGSQPN. The segment covering 149–167 has biased composition (pro residues); that stretch reads SLRPPPEGGYPPFPFVDWG.

This chain is Zinc finger CCCH domain-containing protein 3, found in Oryza sativa subsp. japonica (Rice).